The following is a 561-amino-acid chain: MKYIVMQDVFFVVLLLVLAVPLGIYMYKVMIGEKVFLSRVLEPVERFGYRLMGVSEVGMSAKRYAVSVLAFSAVGFVFVMAVLMLQGFLPLNPEGMKGLSFSLAFNTAASFVSNTNWQAYSGETALSYFSQSIGLTVQNFVSAATGIAVLFAVIRGFIWKKQKTVGNFWQDLFRVTLYILLPLSLILALLLVSQGVVQSFADYSVVETLENGAKQLIPLGPAASQIAIKQLGTNGGGFFGANSAFPFENPSSFTNLIEMLAILLIPVALVVMFGRAVKDSKQGRAIMTAMMIVFVIGVVAITISEQFAGPSYQGVATSGSMEGKEVRFGVGGSSLFAASTTAASNGAVNAMHDSLTPLGGLVPMFFMQLGEVIFGGVGSGLYGMIGFIILTVFIAGLLVGRTPEYLGKKIEPYDMKMVCLLILVPPLLTLFGTAVAVMMPSVQASVSASGAHGFSEVLYAFTSMGNNNGSAFAGFAADTTFTNMVGAVMMLLARFIPLVAALYLAQNMAGKSSVAASSGTLSTKNGMFIGLLIGVVVLVGALSFLPALALGPIADFFTTFK.

10 helical membrane passes run 4 to 24, 65 to 85, 133 to 153, 177 to 197, 253 to 273, 285 to 305, 380 to 400, 417 to 437, 484 to 504, and 528 to 548; these read IVMQ…PLGI, AVSV…VLML, IGLT…LFAV, LYIL…QGVV, FTNL…VVMF, AIMT…TISE, GLYG…LLVG, MVCL…AVAV, MVGA…ALYL, and FIGL…LPAL.

Belongs to the KdpA family. As to quaternary structure, the system is composed of three essential subunits: KdpA, KdpB and KdpC.

It is found in the cell membrane. Part of the high-affinity ATP-driven potassium transport (or Kdp) system, which catalyzes the hydrolysis of ATP coupled with the electrogenic transport of potassium into the cytoplasm. This subunit binds the extracellular potassium ions and delivers the ions to the membrane domain of KdpB through an intramembrane tunnel. The chain is Potassium-transporting ATPase potassium-binding subunit from Listeria monocytogenes serovar 1/2a (strain ATCC BAA-679 / EGD-e).